The chain runs to 561 residues: FAD-binding monooxygenase tazF (561 aa).

FAD is bound by residues 74-77 (TWLD), 86-87 (DI), and tyrosine 92. 84–86 (GCD) contributes to the NADP(+) binding site. Residues 212–218 (NGSSALQ) and 235–236 (RH) contribute to the NADP(+) site.

It belongs to the FAD-binding monooxygenase family. FAD serves as cofactor.

It participates in secondary metabolite biosynthesis. Functionally, FAD-binding monooxygenase; part of the gene cluster that mediates the biosynthesis of azaterrilone A and other azaphilones, a class of fungal metabolites characterized by a highly oxygenated pyrano-quinone bicyclic core and exhibiting a broad range of bioactivities. The first step of the pathway begins with the non-reducing polyketide synthase tazA that assembles one acetyl-CoA starter unit, five malonyl-CoA units, and catalyzes a series of Claisen condensations, methylation, PT-mediated cyclization, and finally releases the first hexaketide precursor through the R-domain. The tazA product then undergoes reduction on its terminal ketone and the following pyran-ring formation by yet undetermined enzyme(s). Dehydration and enoyl reduction, possibly involving the trans-enoyl reductase tazE leads to the next intermediate. TazD is predicted as an acetyltransferase and might catalyze the acetylation steps leading to the synthesis of azaterrilone A. Azaterrilone A is not the final product of the taz pathway and both the highly reducing polyketide synthase tazB and the dual enzyme tazHJ catalyze late steps of the pathway, leading to the production of the 2 final stereoisomers that contain additional polyketide modification whose structures have still to be determined. The sequence is that of FAD-binding monooxygenase tazF from Aspergillus terreus (strain NIH 2624 / FGSC A1156).